Here is a 395-residue protein sequence, read N- to C-terminus: Na(+)/H(+) antiporter NhaA 1 (395 aa).

Helical transmembrane passes span 11–31 (FFSSDASGGIVLIIAAALAMV), 63–83 (MLLWINDALMAVFFLLIGLEV), 99–119 (VFPVIAALGGMIVPALVYLAF), 129–149 (GWAIPAATDIAFALGVLALLG), 158–178 (IFLMALAIIDDLGAIVIIALF), 183–203 (LSMLSLGVAAAAIAVLMALNL), 223–243 (VLKSGVHATLAGVIVGFMIPL), 258–278 (VLHPWVAFMILPLFAFANAGV), 282–302 (GVTLAGLTSLLPLGIMAGLFI), 332–352 (IMAVGILCGIGFTMSIFIATL), and 364–384 (WAKLGILIGSVLSAVVGYLIL).

The protein belongs to the NhaA Na(+)/H(+) (TC 2.A.33) antiporter family.

The protein resides in the cell inner membrane. It carries out the reaction Na(+)(in) + 2 H(+)(out) = Na(+)(out) + 2 H(+)(in). Functionally, na(+)/H(+) antiporter that extrudes sodium in exchange for external protons. The chain is Na(+)/H(+) antiporter NhaA 1 from Klebsiella pneumoniae subsp. pneumoniae (strain ATCC 700721 / MGH 78578).